We begin with the raw amino-acid sequence, 323 residues long: Sphingolipid delta(4)-desaturase DES1 (323 aa).

2 helical membrane-spanning segments follow: residues 41-61 (YNLI…FYLV) and 68-88 (WVVF…TLAI). The short motif at 89 to 93 (HEISH) is the Histidine box-1 element. A helical membrane pass occupies residues 102–122 (AMWNRWFGIFANLPLGLPYSI). The Histidine box-2 signature appears at 128-132 (HMDHH). Helical transmembrane passes span 159–179 (KFIW…CINP), 185–205 (LEII…YLWG), and 209–229 (IFYM…SGHF). Residues 259–263 (HNEHH) carry the Histidine box-3 motif.

The protein belongs to the fatty acid desaturase type 1 family. DEGS subfamily. As to quaternary structure, interacts with RLBP1; the interaction increases synthesis of chromophore-precursors by DEGS1. Expressed in retina and retinal pigment epithelium by Mueller cells (at protein level).

It localises to the endoplasmic reticulum membrane. The enzyme catalyses an N-acylsphinganine + 2 Fe(II)-[cytochrome b5] + O2 + 2 H(+) = an N-acylsphing-4-enine + 2 Fe(III)-[cytochrome b5] + 2 H2O. The catalysed reaction is all-trans-retinol = 11-cis-retinol. It carries out the reaction all-trans-retinol = 9-cis-retinol. It catalyses the reaction all-trans-retinol = 13-cis-retinol. The enzyme catalyses 11-cis-retinol = 13-cis-retinol. The catalysed reaction is 11-cis-retinol = 9-cis-retinol. Its function is as follows. Has sphingolipid-delta-4-desaturase activity. Converts D-erythro-sphinganine to D-erythro-sphingosine (E-sphing-4-enine). Catalyzes the equilibrium isomerization of retinols. This chain is Sphingolipid delta(4)-desaturase DES1 (DEGS1), found in Gallus gallus (Chicken).